The sequence spans 112 residues: Protein GAST1 (112 aa).

The N-terminal stretch at 1–25 (MAGKMSIVLFVLLVVFLTQNQVSRA) is a signal peptide.

The protein belongs to the GASA family. In terms of processing, six disulfide bonds may be present. All shoot organs.

The protein localises to the secreted. The chain is Protein GAST1 (GAST1) from Solanum lycopersicum (Tomato).